A 102-amino-acid chain; its full sequence is Integration host factor subunit beta (102 aa).

Residues 54 to 102 form a disordered region; sequence HHRPARMGRNPKTGEPVALPAKYVPHFKPGKELRERVNSSRHQAPLRSQ. Positions 82-91 are enriched in basic and acidic residues; sequence PGKELRERVN. Residues 93-102 show a composition bias toward polar residues; sequence SRHQAPLRSQ.

The protein belongs to the bacterial histone-like protein family. In terms of assembly, heterodimer of an alpha and a beta chain.

In terms of biological role, this protein is one of the two subunits of integration host factor, a specific DNA-binding protein that functions in genetic recombination as well as in transcriptional and translational control. This Halorhodospira halophila (strain DSM 244 / SL1) (Ectothiorhodospira halophila (strain DSM 244 / SL1)) protein is Integration host factor subunit beta.